The sequence spans 249 residues: Anti-H(O) lectin 2 (249 aa).

A glycan (N-linked (GlcNAc...) asparagine) is linked at Asn-118. Mn(2+)-binding residues include Glu-130 and Asp-132. Ca(2+)-binding residues include Asp-132, Tyr-134, Asn-140, and Asp-145. Residues Asp-145 and His-148 each contribute to the Mn(2+) site. Asn-245 carries an N-linked (GlcNAc...) asparagine glycan.

Belongs to the leguminous lectin family.

Functionally, di-N-acetylchitobiose specific lectin. The polypeptide is Anti-H(O) lectin 2 (Ulex europaeus (Furze)).